Reading from the N-terminus, the 141-residue chain is MQLTSFTDYGLRALIYMASLPEGRMTSISEVTDVYGVSRNHMVKIINQLSRAGYVTAVRGKNGGIRLGKPASAIRIGDVVRELEPLSLVNCSSEFCHITPACRLKQALSKAVQSFLTELDNYTLADLVEENQPLYKLLLVE.

The 128-residue stretch at 2–129 (QLTSFTDYGL…DNYTLADLVE (128 aa)) folds into the HTH rrf2-type domain. The H-T-H motif DNA-binding region spans 28–51 (ISEVTDVYGVSRNHMVKIINQLSR). Positions 91, 96, and 102 each coordinate [2Fe-2S] cluster.

The cofactor is [2Fe-2S] cluster.

Its function is as follows. Nitric oxide-sensitive repressor of genes involved in protecting the cell against nitrosative stress. May require iron for activity. The protein is HTH-type transcriptional repressor NsrR of Escherichia coli O127:H6 (strain E2348/69 / EPEC).